The following is a 245-amino-acid chain: MIIPALDLIDGTVVRLHQGDYGKQRDYGNDPLPRLQDYAAQGAEVLHLVDLTGAKDPAKRQIPLIKTLVAGVNVPVQVGGGVRSEEDVAALLEAGVARVVVGSTAVKSPEMVKGWFERFGTDALVLALDVRIDEQGNKQVAVSGWQENSGVSLEQLVETYLPVGLKHVLCTDISRDGTLAGSNVSLYEEVCARYPQVAFQSSGGIGDIDDVAALRGTGVRGVIVGRALLEGKFTVKEAIACWQNV.

Residue D7 is the Proton acceptor of the active site. D129 acts as the Proton donor in catalysis.

It belongs to the HisA/HisF family.

Its subcellular location is the cytoplasm. The enzyme catalyses 1-(5-phospho-beta-D-ribosyl)-5-[(5-phospho-beta-D-ribosylamino)methylideneamino]imidazole-4-carboxamide = 5-[(5-phospho-1-deoxy-D-ribulos-1-ylimino)methylamino]-1-(5-phospho-beta-D-ribosyl)imidazole-4-carboxamide. It participates in amino-acid biosynthesis; L-histidine biosynthesis; L-histidine from 5-phospho-alpha-D-ribose 1-diphosphate: step 4/9. This Escherichia coli (strain 55989 / EAEC) protein is 1-(5-phosphoribosyl)-5-[(5-phosphoribosylamino)methylideneamino] imidazole-4-carboxamide isomerase.